Reading from the N-terminus, the 93-residue chain is Early nodulin-36B (93 aa).

The polypeptide is Early nodulin-36B (Glycine max (Soybean)).